The following is a 178-amino-acid chain: Ribosome maturation factor RimM (178 aa).

Positions 101–178 constitute a PRC barrel domain; the sequence is DGEYYWYQLQ…EMQVDWDADF (78 aa).

The protein belongs to the RimM family. As to quaternary structure, binds ribosomal protein uS19.

It is found in the cytoplasm. Its function is as follows. An accessory protein needed during the final step in the assembly of 30S ribosomal subunit, possibly for assembly of the head region. Essential for efficient processing of 16S rRNA. May be needed both before and after RbfA during the maturation of 16S rRNA. It has affinity for free ribosomal 30S subunits but not for 70S ribosomes. In Stutzerimonas stutzeri (strain A1501) (Pseudomonas stutzeri), this protein is Ribosome maturation factor RimM.